Reading from the N-terminus, the 2134-residue chain is MSKLFSTVGRTVDEVLSVLNDEDTESYAGPDRTAVVGGGFLTTVDQSSVSTATMGSLQDVQYRTAVDIPGSRVTQGERFFLIDQREWNSTQSEWQLLGKIDIVKELLDQSYAVDGLLKYHSYARFGLDVIVQINPTSFQAGGLIAALVPYDQVDIESIVAMTTYCHGKVNCNINYVVRMKVPYIYSRGCYNLRNSAYSIWMLVIRVWSRLQLGSGTSTQITITTLARFVDLELHGLSPLVAQMMRNEFRLSSSSNIVNLANYDDARAKVSLALGQEEFSRDSSSTGGELVHHFSQWTSIPCLAFTFTFPGTVGPGTHIWSTTVDPFSCNLRASSTVHPTNLSSIAGMFCFWRGDIVFEFQVFCTKYHSGRLMFVYVPGDENTKISTLTAKQASTGLTAVFDINGVNSTLVFRCPFISDTPYRVNPTTHKSLWPYATGKLVCYVYNILNAPASVSPSVSINVYKSAADLELYAPVYGVSPTNTSIFAQGKEDEGGFFSVPEVEQHVVEDKEPQGPLHVTPFGAVKAMEDPQLARKTPGTFPELAPGKPRHTVDHMDLYKFMGRAHYLWGHEFTKTDMQYTFQIPLSPIKEGFVTGTLRWFLSLFQLYRGSLDITMTFAGKTNVDGIVYFVPEGVAIETEREEQTPLLTLNYKTSVGAIRFNTGQTTNVQFRIPFYTPLEHIATHSKNAMDSVLGAITTQITNYSAQDEYLQVTYYISFNEDSQFSVPRAVPVVSSFTDTSSKTVMNTYWLDDDELVEESSHSSFDEIEEAQCSKCKMDLGDIVICSGEKAKHFGVYVGDGVVHVDPEGNATNWFMKRKATVKKSKNLDKWCFALSPRIDRTLICETANLMVGREVEYDIFVKNCETYARGIASGDYGTKEGEKWKTLLSAVGVAAMTTTMMAMRHQLLDTSLTKLPQKVGEVTNEVRKILEDTSAGVREFKEKVSSILRKTWPGKTSIKIMKWTFRIVKMCVGVGLCYAHGWDSKPVTAVVTMFSMDFLDLVIDGIEIGRMIIHELTTPKAQGLSEINQVLSIAKNAKDVIKMLIEIFCKVIERITGEHGKKIQWAQDKKEEIMNVLERAEKWITTSDDHSEGIECLKLVRSIQSVIRGEESLKELAGELRAVGTHVLNKLGRLDKPNAPILVRAEPTVLYLYGNRGGGKSLASMAIAVKLCKELGISHVEGIYTKPIMSDFWDGYAGQPVVIMDDLGQSTSDEDWTNFCQLVSSCPLRLNMANLEKKGTQFNSPFIIASSNLSHPCPKTVYCTDAIARRLHIKVKVSPKEEFSTHAMLDVAKAKKAGAYCNLDCLDFQKISDLASTPVSVQDIVLALLHTNVDKQTVMGNIIQYWAQSNPREVFDTMAEGKNSGKYLWLFEKIKTSKWYILGCVGAALSVSVLGVFAYHMIKNHFRDQQHDQSAYSAAIKPLRVVRLEQSDAQSVVDISNVVHGNLVRVGVGPNEARIHWLNNGWGVYNTYILMPYHGIKDADVDDDLYIERAGTIYSTNMKMVQVLFLESREGDLVLINVPRLPKFRDIRNHFSTEENIRRAEGMPGTLCTLDHERFTLVTESDLKMVEAATYVCEDDKGVRTDISVGRSWKAKACTVAGMCGGALVTSNNKMQNAIVGIHVAGGAPAISRVITKEMIEEMLKTRAQCSRIWKTEFVEKKISVGSKTKYHKSPLYDFCPQKVIKCPTKLFYQGEIDVMQVMLAKYSSPIVSEPLGYATVVEAYTNRMVSFFSEPRQLTYDECINGIEGLDAIDLKTSAGFPYNTLSLKKSDLIINGKKAQRLQQDVEKMEEDLHMNRSIQVVFTTCAKDELRPLSKGMLGKTRAIKACPVSFTILFRKYLGYALAQIQSHPGFHTGIAVGVDPDQDWHCMWYSIVTQCDLVVGLDFSNYDASLSPFMIYHAGRVLGQICGLDPRLVDRIMEPIVNSVHQLGSMRYYVDGSMPSGTPATSVLNSIINVVNISHVLCALEKISVFEVFKLSKILTYGDDVLFCIKKESLDQKSFPLSSFVQGLKELGMSPTGADKMEVKVTPVHKMSFLKRTFYVDEWSICHPRISEETVYSMLAWKSDNASMKHVIETSIWFMFHHGPRKYVIFCTCLRGVLCRVGIGLYIPTYKELEVRYDRLVKDRVIDDSF.

The Cytoplasmic portion of the chain corresponds to 1 to 1377; sequence MSKLFSTVGR…WLFEKIKTSK (1377 aa). The region spanning 781 to 882 is the LRAT domain; that stretch reads IVICSGEKAK…GDYGTKEGEK (102 aa). Active-site residues include His791 and His802. Cys863 (acyl-thioester intermediate) is an active-site residue. Residues 1127–1289 enclose the SF3 helicase domain; that stretch reads LNKLGRLDKP…EEFSTHAMLD (163 aa). Position 1153-1160 (1153-1160) interacts with ATP; sequence GNRGGGKS. An intramembrane segment occupies 1378–1392; that stretch reads WYILGCVGAALSVSV. Residues 1393 to 2134 are Cytoplasmic-facing; the sequence is LGVFAYHMIK…VKDRVIDDSF (742 aa). The residue at position 1415 (Tyr1415) is an O-(5'-phospho-RNA)-tyrosine. One can recognise a Peptidase C3 domain in the interval 1431 to 1643; it reads DAQSVVDISN…ITKEMIEEML (213 aa). Catalysis depends on for protease 3C activity residues His1477, Asp1515, and Cys1603. The RdRp catalytic domain maps to 1880-2001; sequence DLVVGLDFSN…CIKKESLDQK (122 aa).

Belongs to the picornaviridae polyprotein family. Post-translationally, specific enzymatic cleavages by the viral protease in vivo yield a variety of precursors and mature proteins. During virion maturation, non-infectious particles are rendered infectious following cleavage of VP0. This maturation cleavage is followed by a conformational change of the particle. VPg is uridylylated by the polymerase and is covalently linked to the 5'-end of genomic RNA. This uridylylated form acts as a nucleotide-peptide primer for the polymerase.

It is found in the virion. Its subcellular location is the host cytoplasm. The protein localises to the host cytoplasmic vesicle membrane. It carries out the reaction RNA(n) + a ribonucleoside 5'-triphosphate = RNA(n+1) + diphosphate. The catalysed reaction is a ribonucleoside 5'-triphosphate + H2O = a ribonucleoside 5'-diphosphate + phosphate + H(+). It catalyses the reaction Selective cleavage of Gln-|-Gly bond in the poliovirus polyprotein. In other picornavirus reactions Glu may be substituted for Gln, and Ser or Thr for Gly.. Capsid proteins VP1, VP2, and VP3 form a closed capsid enclosing the viral positive strand RNA genome. All these proteins contain a beta-sheet structure called beta-barrel jelly roll. Together they form an icosahedral capsid (T=3) composed of 60 copies of each VP1, VP2, and VP3, with a diameter of approximately 300 Angstroms. VP1 is situated at the 12 fivefold axes, whereas VP2 and VP3 are located at the quasi-sixfold axes. Functionally, VP0 precursor is a component of immature procapsids. The N-terminal domain of VP0, protein VP4, is needed for the assembly of 12 pentamers into the icosahedral structure. Unlike other picornaviruses, AEV VP4 may not be myristoylated. Its function is as follows. Protein 2B and 2BC precursor affect membrane integrity and cause an increase in membrane permeability. In terms of biological role, associates with and induces structural rearrangements of intracellular membranes. It displays RNA-binding, nucleotide binding and NTPase activities. Protein 3A, via its hydrophobic domain, serves as membrane anchor. Functionally, protein 3B is covalently linked to the 5'-end of both the positive-strand and negative-strand genomic RNAs. It acts as a genome-linked replication primer. Its function is as follows. Cysteine protease that generates mature viral proteins from the precursor polyprotein. In addition to its proteolytic activity, it binds to viral RNA, and thus influences viral genome replication. RNA and substrate bind cooperatively to the protease. In terms of biological role, RNA-directed RNA polymerase 3D-POL replicates genomic and antigenomic RNA by recognizing replications specific signals. In Avian encephalomyelitis virus (strain L2Z) (AEV), this protein is Genome polyprotein.